Here is a 229-residue protein sequence, read N- to C-terminus: Cytochrome c oxidase subunit 2 (229 aa).

Residues 1–26 lie on the Mitochondrial intermembrane side of the membrane; sequence MSTWANLGLQDSASPLMEQLIFFHDH. A helical membrane pass occupies residues 27-48; it reads ALLILVMITVLVGYLMVMLFFN. Residues 49–62 are Mitochondrial matrix-facing; sequence SYVNRFLLHGQLIE. A helical transmembrane segment spans residues 63–82; the sequence is MIWTILPAIILLFIAMPSLR. Residues 83–229 are Mitochondrial intermembrane-facing; that stretch reads LLYLLDEINE…IKWISDKVNS (147 aa). Residues histidine 161, cysteine 196, glutamate 198, cysteine 200, histidine 204, and methionine 207 each coordinate Cu cation. A Mg(2+)-binding site is contributed by glutamate 198.

It belongs to the cytochrome c oxidase subunit 2 family. As to quaternary structure, component of the cytochrome c oxidase (complex IV, CIV), a multisubunit enzyme composed of a catalytic core of 3 subunits and several supernumerary subunits. The complex exists as a monomer or a dimer and forms supercomplexes (SCs) in the inner mitochondrial membrane with ubiquinol-cytochrome c oxidoreductase (cytochrome b-c1 complex, complex III, CIII). Cu cation serves as cofactor.

The protein resides in the mitochondrion inner membrane. The enzyme catalyses 4 Fe(II)-[cytochrome c] + O2 + 8 H(+)(in) = 4 Fe(III)-[cytochrome c] + 2 H2O + 4 H(+)(out). Its function is as follows. Component of the cytochrome c oxidase, the last enzyme in the mitochondrial electron transport chain which drives oxidative phosphorylation. The respiratory chain contains 3 multisubunit complexes succinate dehydrogenase (complex II, CII), ubiquinol-cytochrome c oxidoreductase (cytochrome b-c1 complex, complex III, CIII) and cytochrome c oxidase (complex IV, CIV), that cooperate to transfer electrons derived from NADH and succinate to molecular oxygen, creating an electrochemical gradient over the inner membrane that drives transmembrane transport and the ATP synthase. Cytochrome c oxidase is the component of the respiratory chain that catalyzes the reduction of oxygen to water. Electrons originating from reduced cytochrome c in the intermembrane space (IMS) are transferred via the dinuclear copper A center (CU(A)) of subunit 2 and heme A of subunit 1 to the active site in subunit 1, a binuclear center (BNC) formed by heme A3 and copper B (CU(B)). The BNC reduces molecular oxygen to 2 water molecules using 4 electrons from cytochrome c in the IMS and 4 protons from the mitochondrial matrix. This chain is Cytochrome c oxidase subunit 2 (mt:CoII), found in Drosophila subobscura (Fruit fly).